Consider the following 188-residue polypeptide: dCTP deaminase (188 aa).

DCTP is bound by residues 111–116, 135–137, Gln-156, Tyr-170, Lys-179, and Gln-180; these read KSTYAR and TLE. The active-site Proton donor/acceptor is the Glu-137.

This sequence belongs to the dCTP deaminase family. In terms of assembly, homotrimer.

The enzyme catalyses dCTP + H2O + H(+) = dUTP + NH4(+). It participates in pyrimidine metabolism; dUMP biosynthesis; dUMP from dCTP (dUTP route): step 1/2. Catalyzes the deamination of dCTP to dUTP. This chain is dCTP deaminase, found in Rickettsia africae (strain ESF-5).